Here is a 179-residue protein sequence, read N- to C-terminus: Large ribosomal subunit protein bL19 (179 aa).

The protein belongs to the bacterial ribosomal protein bL19 family.

Its function is as follows. This protein is located at the 30S-50S ribosomal subunit interface and may play a role in the structure and function of the aminoacyl-tRNA binding site. The polypeptide is Large ribosomal subunit protein bL19 (Rhizobium johnstonii (strain DSM 114642 / LMG 32736 / 3841) (Rhizobium leguminosarum bv. viciae)).